Consider the following 594-residue polypeptide: Spermidine/putrescine import ATP-binding protein PotA (594 aa).

The 412-residue stretch at 24–435 (IEIKKINKTY…PANNWVANFI (412 aa)) folds into the ABC transporter domain. Residue 57–64 (GPSGCGKT) coordinates ATP. The interval 125–304 (RKPIENVSAD…EWFDKKKLTR (180 aa)) is insert.

It belongs to the ABC transporter superfamily. Spermidine/putrescine importer (TC 3.A.1.11.1) family. The complex is composed of two ATP-binding proteins (PotA), two transmembrane proteins (PotB and PotC) and a solute-binding protein (PotD).

It localises to the cell membrane. It carries out the reaction ATP + H2O + polyamine-[polyamine-binding protein]Side 1 = ADP + phosphate + polyamineSide 2 + [polyamine-binding protein]Side 1.. Part of the ABC transporter complex PotABCD involved in spermidine/putrescine import. Responsible for energy coupling to the transport system. This is Spermidine/putrescine import ATP-binding protein PotA from Malacoplasma penetrans (strain HF-2) (Mycoplasma penetrans).